The sequence spans 361 residues: S-adenosylmethionine:tRNA ribosyltransferase-isomerase (361 aa).

This sequence belongs to the QueA family. Monomer.

It is found in the cytoplasm. The enzyme catalyses 7-aminomethyl-7-carbaguanosine(34) in tRNA + S-adenosyl-L-methionine = epoxyqueuosine(34) in tRNA + adenine + L-methionine + 2 H(+). The protein operates within tRNA modification; tRNA-queuosine biosynthesis. Its function is as follows. Transfers and isomerizes the ribose moiety from AdoMet to the 7-aminomethyl group of 7-deazaguanine (preQ1-tRNA) to give epoxyqueuosine (oQ-tRNA). The sequence is that of S-adenosylmethionine:tRNA ribosyltransferase-isomerase from Rhizobium etli (strain ATCC 51251 / DSM 11541 / JCM 21823 / NBRC 15573 / CFN 42).